Here is a 304-residue protein sequence, read N- to C-terminus: MNRLAVEIPGLSLKNPIMPASGCFGFGQEYSKYYDLNKLGAIMAKAVTPEPRLGNPTPRVAETASGMLNAIGLQNPGLEHVLAHELPFLEQFETPIIANVAGATEDDYVEVCSRIGESKAVKAIELNISCPNVKHGGIAFGTDPEVAHRLTKAVKSVASVPVYVKLSPNVADIVSIAQAIEAAGADGLTMINTLLGMRIDLKTRKPIIANGTGGLSGPAIKPVAIRMIHQVRSVSNIPIIGMGGVQTVDDVLEFLIAGADAVAVGTMNFTDPFICPKLITELPIRMDELGISSLQELKKERANQ.

FMN is bound by residues serine 21 and lysine 45–alanine 46. Residues lysine 45 and asparagine 69–leucine 73 each bind substrate. Asparagine 99 and asparagine 127 together coordinate FMN. Asparagine 127 contacts substrate. Catalysis depends on cysteine 130, which acts as the Nucleophile. The FMN site is built by lysine 165 and isoleucine 191. Asparagine 192–threonine 193 is a substrate binding site. FMN-binding positions include glycine 217, glycine 243 to glycine 244, and glycine 265 to threonine 266.

It belongs to the dihydroorotate dehydrogenase family. Type 1 subfamily. In terms of assembly, heterotetramer of 2 PyrK and 2 PyrD type B subunits. The cofactor is FMN.

It localises to the cytoplasm. The catalysed reaction is (S)-dihydroorotate + NAD(+) = orotate + NADH + H(+). It functions in the pathway pyrimidine metabolism; UMP biosynthesis via de novo pathway; orotate from (S)-dihydroorotate (NAD(+) route): step 1/1. In terms of biological role, catalyzes the conversion of dihydroorotate to orotate with NAD(+) as electron acceptor. This chain is Dihydroorotate dehydrogenase B (NAD(+)), catalytic subunit (pyrD), found in Listeria welshimeri serovar 6b (strain ATCC 35897 / DSM 20650 / CCUG 15529 / CIP 8149 / NCTC 11857 / SLCC 5334 / V8).